Consider the following 255-residue polypeptide: Small ribosomal subunit protein uS2 (255 aa).

The interval 230–255 is disordered; sequence QSSSGRDLGASSEVPVEPALEEAAEG.

The protein belongs to the universal ribosomal protein uS2 family.

In Rhizobium etli (strain CIAT 652), this protein is Small ribosomal subunit protein uS2.